The primary structure comprises 142 residues: uncharacterized protein (142 aa).

A disordered region spans residues 1–22 (MSGSVNQNTDQHSQDSSSTPNN). Helical transmembrane passes span 63–83 (LFVM…VLLV) and 109–129 (IIDG…FVDL).

The protein resides in the membrane. This is an uncharacterized protein from Acanthamoeba polyphaga mimivirus (APMV).